A 440-amino-acid polypeptide reads, in one-letter code: 23S rRNA (uracil(1939)-C(5))-methyltransferase RlmD (440 aa).

The TRAM domain maps to 8–69; that stretch reads PQKINKLQRE…RQFGLATTKK (62 aa). [4Fe-4S] cluster-binding residues include C82, C88, C91, and C169. Q272, F301, N306, E322, D349, and D370 together coordinate S-adenosyl-L-methionine. The active-site Nucleophile is the C396.

Belongs to the class I-like SAM-binding methyltransferase superfamily. RNA M5U methyltransferase family. RlmD subfamily.

The catalysed reaction is uridine(1939) in 23S rRNA + S-adenosyl-L-methionine = 5-methyluridine(1939) in 23S rRNA + S-adenosyl-L-homocysteine + H(+). Its function is as follows. Catalyzes the formation of 5-methyl-uridine at position 1939 (m5U1939) in 23S rRNA. The chain is 23S rRNA (uracil(1939)-C(5))-methyltransferase RlmD from Mannheimia succiniciproducens (strain KCTC 0769BP / MBEL55E).